Consider the following 125-residue polypeptide: Small ribosomal subunit protein uS13 (125 aa).

The protein belongs to the universal ribosomal protein uS13 family. Part of the 30S ribosomal subunit. Forms a loose heterodimer with protein S19. Forms two bridges to the 50S subunit in the 70S ribosome.

Functionally, located at the top of the head of the 30S subunit, it contacts several helices of the 16S rRNA. In the 70S ribosome it contacts the 23S rRNA (bridge B1a) and protein L5 of the 50S subunit (bridge B1b), connecting the 2 subunits; these bridges are implicated in subunit movement. Contacts the tRNAs in the A and P-sites. The chain is Small ribosomal subunit protein uS13 from Rickettsia felis (strain ATCC VR-1525 / URRWXCal2) (Rickettsia azadi).